The primary structure comprises 484 residues: Glutamate--tRNA ligase (484 aa).

The 'HIGH' region signature appears at 11–21; sequence PSPTGYLHIGN. A 'KMSKS' region motif is present at residues 252–256; sequence KLSKR. Lys255 is an ATP binding site.

This sequence belongs to the class-I aminoacyl-tRNA synthetase family. Glutamate--tRNA ligase type 1 subfamily. As to quaternary structure, monomer.

The protein localises to the cytoplasm. The enzyme catalyses tRNA(Glu) + L-glutamate + ATP = L-glutamyl-tRNA(Glu) + AMP + diphosphate. Functionally, catalyzes the attachment of glutamate to tRNA(Glu) in a two-step reaction: glutamate is first activated by ATP to form Glu-AMP and then transferred to the acceptor end of tRNA(Glu). The protein is Glutamate--tRNA ligase of Staphylococcus epidermidis (strain ATCC 35984 / DSM 28319 / BCRC 17069 / CCUG 31568 / BM 3577 / RP62A).